A 383-amino-acid chain; its full sequence is Succinyl-diaminopimelate desuccinylase (383 aa).

H73 is a binding site for Zn(2+). The active site involves D75. D107 lines the Zn(2+) pocket. E141 acts as the Proton acceptor in catalysis. Zn(2+) is bound by residues E142, E170, and H356.

The protein belongs to the peptidase M20A family. DapE subfamily. In terms of assembly, homodimer. The cofactor is Zn(2+). Co(2+) serves as cofactor.

The catalysed reaction is N-succinyl-(2S,6S)-2,6-diaminopimelate + H2O = (2S,6S)-2,6-diaminopimelate + succinate. Its pathway is amino-acid biosynthesis; L-lysine biosynthesis via DAP pathway; LL-2,6-diaminopimelate from (S)-tetrahydrodipicolinate (succinylase route): step 3/3. In terms of biological role, catalyzes the hydrolysis of N-succinyl-L,L-diaminopimelic acid (SDAP), forming succinate and LL-2,6-diaminopimelate (DAP), an intermediate involved in the bacterial biosynthesis of lysine and meso-diaminopimelic acid, an essential component of bacterial cell walls. The polypeptide is Succinyl-diaminopimelate desuccinylase (Pseudomonas putida (strain W619)).